The sequence spans 2188 residues: Glutamate synthase 2 [NADH], chloroplastic (2188 aa).

The transit peptide at 1–30 (MSAAQGLALKLRAAPAAGGVRGEKRRRAAS) directs the protein to the chloroplast. 2 disordered regions span residues 14–40 (APAAGGVRGEKRRRAASATAAAAARPR) and 61–94 (VAPRASASRQAEAGAGAGAARPPPRSMSKIPESS). The span at 65–80 (ASASRQAEAGAGAGAA) shows a compositional bias: low complexity. The Nucleophile role is filled by cysteine 107. Positions 107–511 (CGVGFIAELS…PGMMLLVDFE (405 aa)) constitute a Glutamine amidotransferase type-2 domain. 1198 to 1255 (LAETHQTLVANGLRGRAVLQTDGQMKTGRDVAVACLLGAEEFGFSTAPLITLGCIMMR) is an FMN binding site. Residues cysteine 1251, cysteine 1257, and cysteine 1262 each coordinate [3Fe-4S] cluster. NAD(+) is bound at residue 1974-1988 (GGGDTGTDCIGTSIR).

It belongs to the glutamate synthase family. Monomer. Requires [3Fe-4S] cluster as cofactor. FAD is required as a cofactor. FMN serves as cofactor. Expressed in leaf blades and sheaths.

It localises to the plastid. The protein localises to the chloroplast. The catalysed reaction is 2 L-glutamate + NAD(+) = L-glutamine + 2-oxoglutarate + NADH + H(+). Its pathway is amino-acid biosynthesis; L-glutamate biosynthesis via GLT pathway; L-glutamate from 2-oxoglutarate and L-glutamine (NAD(+) route): step 1/1. It participates in energy metabolism; nitrogen metabolism. Involved in glutamate biosynthesis. The sequence is that of Glutamate synthase 2 [NADH], chloroplastic from Oryza sativa subsp. japonica (Rice).